A 483-amino-acid chain; its full sequence is Aspartyl/glutamyl-tRNA(Asn/Gln) amidotransferase subunit B (483 aa).

The protein belongs to the GatB/GatE family. GatB subfamily. As to quaternary structure, heterotrimer of A, B and C subunits.

The enzyme catalyses L-glutamyl-tRNA(Gln) + L-glutamine + ATP + H2O = L-glutaminyl-tRNA(Gln) + L-glutamate + ADP + phosphate + H(+). It catalyses the reaction L-aspartyl-tRNA(Asn) + L-glutamine + ATP + H2O = L-asparaginyl-tRNA(Asn) + L-glutamate + ADP + phosphate + 2 H(+). In terms of biological role, allows the formation of correctly charged Asn-tRNA(Asn) or Gln-tRNA(Gln) through the transamidation of misacylated Asp-tRNA(Asn) or Glu-tRNA(Gln) in organisms which lack either or both of asparaginyl-tRNA or glutaminyl-tRNA synthetases. The reaction takes place in the presence of glutamine and ATP through an activated phospho-Asp-tRNA(Asn) or phospho-Glu-tRNA(Gln). This chain is Aspartyl/glutamyl-tRNA(Asn/Gln) amidotransferase subunit B, found in Roseiflexus castenholzii (strain DSM 13941 / HLO8).